Reading from the N-terminus, the 113-residue chain is Ig heavy chain V-III region ABE-47N (113 aa).

One can recognise an Ig-like domain in the interval 1–113 (EVKLEESGGG…YWGQGTLVTV (113 aa)). Cys22 and Cys98 are oxidised to a cystine.

The chain is Ig heavy chain V-III region ABE-47N from Mus musculus (Mouse).